Consider the following 701-residue polypeptide: Translation factor GUF1, mitochondrial (701 aa).

The N-terminal 29 residues, methionine 1 to tyrosine 29, are a transit peptide targeting the mitochondrion. Residues serine 23–proline 50 are compositionally biased toward low complexity. Residues serine 23–methionine 85 form a disordered region. Positions glutamate 98–threonine 283 constitute a tr-type G domain. GTP is bound by residues alanine 107–serine 114, aspartate 172–histidine 176, and asparagine 226–aspartate 229.

It belongs to the TRAFAC class translation factor GTPase superfamily. Classic translation factor GTPase family. LepA subfamily.

Its subcellular location is the mitochondrion inner membrane. The catalysed reaction is GTP + H2O = GDP + phosphate + H(+). Promotes mitochondrial protein synthesis. May act as a fidelity factor of the translation reaction, by catalyzing a one-codon backward translocation of tRNAs on improperly translocated ribosomes. Binds to mitochondrial ribosomes in a GTP-dependent manner. This chain is Translation factor GUF1, mitochondrial, found in Pyricularia oryzae (strain 70-15 / ATCC MYA-4617 / FGSC 8958) (Rice blast fungus).